The primary structure comprises 1043 residues: Liprin-alpha-4 (1043 aa).

Coiled coils occupy residues 24–332 and 426–470; these read EKVR…GRGG and ILDA…RVTS. Residues 498–617 form a disordered region; sequence SASPPLSGRS…AKRKGIKSSI (120 aa). Phosphoserine is present on Ser-500. Residues 505-516 show a composition bias toward polar residues; it reads GRSTPKLTSRSA. Ser-541 carries the phosphoserine modification. The segment covering 544–555 has biased composition (basic and acidic residues); sequence SREENREDKATI. A compositionally biased stretch (low complexity) spans 590-602; it reads QDSNPSSSNSSQD. SAM domains follow at residues 688–754, 803–867, and 891–960; these read WDGP…MVSL, NHEW…LKRL, and WTND…LLAL. Residues 864–890 are a coiled coil; the sequence is LKRLNYDRKELEKRREESQHEIKDVLV.

This sequence belongs to the liprin family. Liprin-alpha subfamily. As to quaternary structure, forms homodimers and heterodimers with liprins-alpha and liprins-beta. Interacts with the second PTPase domain of PTPRD, PTPRF and PTPRS. Interacts with RIMS1 and RIMS2. Interacts with GIT1 and GIT2. Interacts with GRIP1. Interacts with KIF1A.

It is found in the cytoplasm. It localises to the cell surface. In terms of biological role, may regulate the disassembly of focal adhesions. May localize receptor-like tyrosine phosphatases type 2A at specific sites on the plasma membrane, possibly regulating their interaction with the extracellular environment and their association with substrates. The chain is Liprin-alpha-4 (Ppfia4) from Rattus norvegicus (Rat).